The sequence spans 146 residues: Large ribosomal subunit protein uL15 (146 aa).

Positions 1–10 are enriched in basic and acidic residues; that stretch reads MTLKLHDLRP. The tract at residues 1-41 is disordered; sequence MTLKLHDLRPARGSKTARTRVGRGDGSKGKTAGRGTKGTRA.

This sequence belongs to the universal ribosomal protein uL15 family. As to quaternary structure, part of the 50S ribosomal subunit.

Binds to the 23S rRNA. This chain is Large ribosomal subunit protein uL15, found in Mycobacterium bovis (strain BCG / Pasteur 1173P2).